Consider the following 368-residue polypeptide: Peptide chain release factor 2 (368 aa).

Q250 carries the N5-methylglutamine modification.

This sequence belongs to the prokaryotic/mitochondrial release factor family. In terms of processing, methylated by PrmC. Methylation increases the termination efficiency of RF2.

It is found in the cytoplasm. Its function is as follows. Peptide chain release factor 2 directs the termination of translation in response to the peptide chain termination codons UGA and UAA. In Chlamydia trachomatis serovar L2 (strain ATCC VR-902B / DSM 19102 / 434/Bu), this protein is Peptide chain release factor 2.